Here is a 599-residue protein sequence, read N- to C-terminus: Nucleoporin p58/p45 (599 aa).

5 tandem repeats follow at residues 7-8 (FG), 30-31 (FG), 44-45 (FG), 63-64 (FG), and 68-69 (FG). The tract at residues 7–579 (FGSGTLGSTT…VSNPASAGFG (573 aa)) is 14 X 2 AA repeats of F-G. The interval 213-247 (NEGLGGIDFSSSSDKKSDKTGTRPEDSKALKDENL) is disordered. Over residues 225-246 (SDKKSDKTGTRPEDSKALKDEN) the composition is skewed to basic and acidic residues. 2 coiled-coil regions span residues 256 to 276 (ENLQ…SRMS) and 314 to 381 (ETAQ…SHIT). T331 is subject to Phosphothreonine. 9 consecutive repeat copies span residues 488–489 (FG), 492–493 (FG), 513–514 (FG), 519–520 (FG), 529–530 (FG), 531–532 (FG), 545–546 (FG), 568–569 (FG), and 578–579 (FG). The disordered stretch occupies residues 579-599 (GTGGQLLQLKKPPAGNKRGKR).

This sequence belongs to the NUP58 family. Component of the p62 complex, a complex at least composed of NUP62, NUP54, and NUP58. Interacts with NUTF2. Interacts with SRP1-alpha and Importin p97 proteins when they are together, but not with SRP1-alpha protein alone. In terms of processing, O-glycosylated.

It localises to the nucleus. It is found in the nuclear pore complex. Its subcellular location is the nucleus membrane. Functionally, component of the nuclear pore complex, a complex required for the trafficking across the nuclear membrane. In Homo sapiens (Human), this protein is Nucleoporin p58/p45.